The chain runs to 100 residues: Nucleoid-associated protein Caur_0522 (100 aa).

This sequence belongs to the YbaB/EbfC family. In terms of assembly, homodimer.

Its subcellular location is the cytoplasm. The protein localises to the nucleoid. Its function is as follows. Binds to DNA and alters its conformation. May be involved in regulation of gene expression, nucleoid organization and DNA protection. The protein is Nucleoid-associated protein Caur_0522 of Chloroflexus aurantiacus (strain ATCC 29366 / DSM 635 / J-10-fl).